The following is a 344-amino-acid chain: Dihydroorotase (344 aa).

The Zn(2+) site is built by His13 and His15. Substrate-binding positions include 15-17 and Asn41; that span reads HLR. Residues Lys99, His136, and His174 each contribute to the Zn(2+) site. N6-carboxylysine is present on Lys99. His136 serves as a coordination point for substrate. Leu219 provides a ligand contact to substrate. Residue Asp247 coordinates Zn(2+). The active site involves Asp247. Substrate contacts are provided by His251 and Ala263.

Belongs to the metallo-dependent hydrolases superfamily. DHOase family. Class II DHOase subfamily. Homodimer. Requires Zn(2+) as cofactor.

The catalysed reaction is (S)-dihydroorotate + H2O = N-carbamoyl-L-aspartate + H(+). It participates in pyrimidine metabolism; UMP biosynthesis via de novo pathway; (S)-dihydroorotate from bicarbonate: step 3/3. In terms of biological role, catalyzes the reversible cyclization of carbamoyl aspartate to dihydroorotate. The protein is Dihydroorotase of Acinetobacter baumannii (strain SDF).